We begin with the raw amino-acid sequence, 184 residues long: Large ribosomal subunit protein uL6 (184 aa).

It belongs to the universal ribosomal protein uL6 family. Part of the 50S ribosomal subunit.

Its function is as follows. This protein binds to the 23S rRNA, and is important in its secondary structure. It is located near the subunit interface in the base of the L7/L12 stalk, and near the tRNA binding site of the peptidyltransferase center. This Methanosphaera stadtmanae (strain ATCC 43021 / DSM 3091 / JCM 11832 / MCB-3) protein is Large ribosomal subunit protein uL6.